The sequence spans 303 residues: Methionyl-tRNA formyltransferase (303 aa).

Residue 110–113 participates in (6S)-5,6,7,8-tetrahydrofolate binding; that stretch reads SLLP.

The protein belongs to the Fmt family.

The catalysed reaction is L-methionyl-tRNA(fMet) + (6R)-10-formyltetrahydrofolate = N-formyl-L-methionyl-tRNA(fMet) + (6S)-5,6,7,8-tetrahydrofolate + H(+). In terms of biological role, attaches a formyl group to the free amino group of methionyl-tRNA(fMet). The formyl group appears to play a dual role in the initiator identity of N-formylmethionyl-tRNA by promoting its recognition by IF2 and preventing the misappropriation of this tRNA by the elongation apparatus. This Ehrlichia ruminantium (strain Gardel) protein is Methionyl-tRNA formyltransferase.